The chain runs to 331 residues: ADP,ATP carrier protein 1, mitochondrial (331 aa).

Solcar repeat units follow at residues 29–122, 134–226, and 238–320; these read KNFA…FKRM, KWFG…LKPV, and ASFA…LQIL. 5 consecutive transmembrane segments (helical) span residues 31–58, 99–123, 132–152, 202–223, and 237–257; these read FAID…VKLL, TANV…KRMF, YWKW…SSLF, FNIS…YDSL, and FASF…SYPI. ADP is bound by residues arginine 104 and lysine 116. ADP is bound at residue arginine 261. Positions 261-266 are important for transport activity; it reads RRRMMM. Residues 261-266 carry the Nucleotide carrier signature motif motif; that stretch reads RRRMMM. A helical membrane pass occupies residues 297–317; it reads AGANILRAIAGAGVLSGYDQL.

This sequence belongs to the mitochondrial carrier (TC 2.A.29) family. Monomer.

Its subcellular location is the mitochondrion inner membrane. It carries out the reaction ADP(in) + ATP(out) = ADP(out) + ATP(in). The matrix-open state (m-state) is inhibited by the membrane-permeable bongkrekic acid (BKA). The cytoplasmic-open state (c-state) is inhibited by the membrane-impermeable toxic inhibitor carboxyatractyloside (CATR). Its function is as follows. ADP:ATP antiporter that mediates import of ADP into the mitochondrial matrix for ATP synthesis, and export of ATP out to fuel the cell. Cycles between the cytoplasmic-open state (c-state) and the matrix-open state (m-state): operates by the alternating access mechanism with a single substrate-binding site intermittently exposed to either the cytosolic (c-state) or matrix (m-state) side of the inner mitochondrial membrane. This chain is ADP,ATP carrier protein 1, mitochondrial (ANT-G1), found in Triticum aestivum (Wheat).